We begin with the raw amino-acid sequence, 449 residues long: Tubulin alpha-2 chain (449 aa).

8 residues coordinate GTP: Gln-11, Glu-71, Ser-140, Gly-144, Thr-145, Thr-179, Asn-206, and Asn-228. Residue Glu-71 participates in Mg(2+) binding. Glu-254 is an active-site residue.

Belongs to the tubulin family. In terms of assembly, dimer of alpha and beta chains. A typical microtubule is a hollow water-filled tube with an outer diameter of 25 nm and an inner diameter of 15 nM. Alpha-beta heterodimers associate head-to-tail to form protofilaments running lengthwise along the microtubule wall with the beta-tubulin subunit facing the microtubule plus end conferring a structural polarity. Microtubules usually have 13 protofilaments but different protofilament numbers can be found in some organisms and specialized cells. Mg(2+) is required as a cofactor.

The protein resides in the cytoplasm. It localises to the cytoskeleton. It carries out the reaction GTP + H2O = GDP + phosphate + H(+). In terms of biological role, tubulin is the major constituent of microtubules, a cylinder consisting of laterally associated linear protofilaments composed of alpha- and beta-tubulin heterodimers. Microtubules grow by the addition of GTP-tubulin dimers to the microtubule end, where a stabilizing cap forms. Below the cap, tubulin dimers are in GDP-bound state, owing to GTPase activity of alpha-tubulin. This is Tubulin alpha-2 chain (tub1) from Schizosaccharomyces pombe (strain 972 / ATCC 24843) (Fission yeast).